The following is a 91-amino-acid chain: Small ribosomal subunit protein bS18 (91 aa).

It belongs to the bacterial ribosomal protein bS18 family. Part of the 30S ribosomal subunit. Forms a tight heterodimer with protein bS6.

Functionally, binds as a heterodimer with protein bS6 to the central domain of the 16S rRNA, where it helps stabilize the platform of the 30S subunit. The polypeptide is Small ribosomal subunit protein bS18 (Paraburkholderia xenovorans (strain LB400)).